Consider the following 474-residue polypeptide: P2X purinoceptor 2 (474 aa).

At 1 to 42 the chain is on the cytoplasmic side; it reads MAATHPKAPTAQRLRQGWSAFWDYETPKVIVVRNRPLGVVYR. A helical membrane pass occupies residues 43–60; it reads AVQLLILLYFVWYVFIVQ. At 61–333 the chain is on the extracellular side; the sequence is KSYQDSETGP…IVHGQAGKFS (273 aa). ATP contacts are provided by Lys77 and Lys79. Cystine bridges form between Cys121–Cys172, Cys132–Cys155, and Cys138–Cys166. N-linked (GlcNAc...) asparagine glycosylation occurs at Asn129. Asn190 carries an N-linked (GlcNAc...) asparagine glycan. Thr192 is an ATP binding site. Cys222 and Cys232 are disulfide-bonded. Residue Asn247 is glycosylated (N-linked (GlcNAc...) asparagine). Residues Cys266 and Cys275 are joined by a disulfide bond. Residues Ser292, Asn296, and Arg298 each contribute to the ATP site. N-linked (GlcNAc...) asparagine glycosylation occurs at Asn306. Position 315 (Lys315) interacts with ATP. The interval 316–329 is pore-forming motif; it reads AYGIRIDVIVHGQA. A helical membrane pass occupies residues 334-354; that stretch reads LIPTIINLATALTSIGVGSFL. The Cytoplasmic portion of the chain corresponds to 355–474; that stretch reads CDWILLTFMN…PTDPKGLAQL (120 aa). A disordered region spans residues 445–474; the sequence is PDRCVGQGLPSSESPLQDSTPTDPKGLAQL. Positions 453 to 466 are enriched in polar residues; the sequence is LPSSESPLQDSTPT.

It belongs to the P2X receptor family. In terms of assembly, homotrimer and heterotrimer; functional P2XRs are organized as homomeric and heteromeric trimers. Homotrimer. Forms heterodimer with P2RX1. Forms heterotrimer with P2RX6. Forms heterotrimer with P2RX3. In terms of tissue distribution, express in organ of Corti.

Its subcellular location is the cell membrane. The enzyme catalyses Ca(2+)(in) = Ca(2+)(out). It carries out the reaction K(+)(in) = K(+)(out). The catalysed reaction is Na(+)(in) = Na(+)(out). With respect to regulation, fast activation by external ATP. Exhibits slow desensitization during prolonged ATP activation. Not sensitive to the ATP agonist:alpha/beta-methylene-ATP. In terms of biological role, ATP-gated nonselective transmembrane cation channel permeable to potassium, sodium and calcium. Activation by extracellular ATP induces a variety of cellular responses, such as excitatory postsynaptic responses in sensory neurons, neuromuscular junctions (NMJ) formation, hearing, perception of taste and peristalsis. In the inner ear, regulates sound transduction and auditory neurotransmission, outer hair cell electromotility, inner ear gap junctions, and K(+) recycling. Mediates synaptic transmission between neurons and from neurons to smooth muscle. The chain is P2X purinoceptor 2 (P2RX2) from Cavia porcellus (Guinea pig).